Consider the following 1383-residue polypeptide: Spike glycoprotein (1383 aa).

An N-terminal signal peptide occupies residues M1 to R25. Residues C26 to H734 form an S1 region. Residues C26–P1324 lie on the Virion surface side of the membrane. Positions F617–V745 are interaction with host ANPEP. Positions S735–Q1383 are S2. The tract at residues I955 to V975 is fusion peptide. A heptad repeat 1 (HR1) region spans residues L969–L1088. Coiled-coil stretches lie at residues Q1036–V1080 and T1272–L1314. Residues P1240–I1336 form a heptad repeat 2 (HR2) region. The chain crosses the membrane as a helical span at residues W1325–F1344. The Intravirion segment spans residues C1345–Q1383. Positions K1379–Q1383 match the KxHxx motif.

Belongs to the alphacoronaviruses spike protein family. As to quaternary structure, homotrimer. During virus morphogenesis, found in a complex with M and HE proteins. Interacts with host ANPEP.

Its subcellular location is the virion membrane. It is found in the host endoplasmic reticulum-Golgi intermediate compartment membrane. Functionally, S1 region attaches the virion to the cell membrane by interacting with host ANPEP/aminopeptidase N, initiating the infection. Binding to the receptor probably induces conformational changes in the S glycoprotein unmasking the fusion peptide of S2 region and activating membranes fusion. S2 region belongs to the class I viral fusion protein. Under the current model, the protein has at least 3 conformational states: pre-fusion native state, pre-hairpin intermediate state, and post-fusion hairpin state. During viral and target cell membrane fusion, the coiled coil regions (heptad repeats) regions assume a trimer-of-hairpins structure, positioning the fusion peptide in close proximity to the C-terminal region of the ectodomain. The formation of this structure appears to drive apposition and subsequent fusion of viral and target cell membranes. The polypeptide is Spike glycoprotein (Porcine epidemic diarrhea virus (strain CV777) (PEDV)).